We begin with the raw amino-acid sequence, 499 residues long: Glycerol kinase (499 aa).

Residue Thr-12 participates in ADP binding. 3 residues coordinate ATP: Thr-12, Thr-13, and Ser-14. Residue Thr-12 coordinates sn-glycerol 3-phosphate. Arg-16 contacts ADP. Sn-glycerol 3-phosphate-binding residues include Arg-82, Glu-83, Tyr-134, and Asp-245. The glycerol site is built by Arg-82, Glu-83, Tyr-134, Asp-245, and Gln-246. Positions 267 and 311 each coordinate ADP. Residues Thr-267, Gly-311, Gln-315, and Gly-412 each coordinate ATP. ADP is bound by residues Gly-412 and Asn-416.

The protein belongs to the FGGY kinase family.

It catalyses the reaction glycerol + ATP = sn-glycerol 3-phosphate + ADP + H(+). Its pathway is polyol metabolism; glycerol degradation via glycerol kinase pathway; sn-glycerol 3-phosphate from glycerol: step 1/1. Its activity is regulated as follows. Inhibited by fructose 1,6-bisphosphate (FBP). Key enzyme in the regulation of glycerol uptake and metabolism. Catalyzes the phosphorylation of glycerol to yield sn-glycerol 3-phosphate. This chain is Glycerol kinase, found in Acidiphilium cryptum (strain JF-5).